The chain runs to 706 residues: Frizzled-6 (706 aa).

The first 18 residues, 1–18 (MEMFTFLLTCIFLPLLRG), serve as a signal peptide directing secretion. The region spanning 19 to 132 (HSLFTCEPIT…CDRLQYCDET (114 aa)) is the FZ domain. Residues 19 to 201 (HSLFTCEPIT…SDELEFAKSF (183 aa)) lie on the Extracellular side of the membrane. 5 disulfides stabilise this stretch: Cys-24–Cys-85, Cys-32–Cys-78, Cys-69–Cys-106, Cys-95–Cys-129, and Cys-99–Cys-123. N-linked (GlcNAc...) asparagine glycosylation occurs at Asn-38. The helical transmembrane segment at 202 to 222 (IGTVSIFCLCATLFTFLTFLI) threads the bilayer. Topologically, residues 223 to 233 (DVRRFRYPERP) are cytoplasmic. The helical transmembrane segment at 234 to 254 (IIYYSVCYSIVSLMYFIGFLL) threads the bilayer. Topologically, residues 255-284 (GDSTACNKADEKLELGDTVVLGSQNKACTV) are extracellular. Residues 285-305 (LFMLLYFFTMAGTVWWVILTI) traverse the membrane as a helical segment. Topologically, residues 306–324 (TWFLAAGRKWSCEAIEQKA) are cytoplasmic. The helical transmembrane segment at 325–345 (VWFHAVAWGTPGFLTVMLLAM) threads the bilayer. The Extracellular portion of the chain corresponds to 346–370 (NKVEGDNISGVCFVGLYDLDASRYF). Asn-352 is a glycosylation site (N-linked (GlcNAc...) asparagine). Residues 371–391 (VLLPLCLCVFVGLSLLLAGII) traverse the membrane as a helical segment. The Cytoplasmic portion of the chain corresponds to 392 to 416 (SLNHVRQVIQHDGRNQEKLKKFMIR). The chain crosses the membrane as a helical span at residues 417 to 437 (IGVFSGLYLVPLVTLLGCYVY). Residues 438–473 (EQVNRITWEITWVSDHCRQYHIPCPYQAKAKARPEL) lie on the Extracellular side of the membrane. Residues 474–494 (ALFMIKYLMTLIVGISAVFWV) form a helical membrane-spanning segment. Residues 495–706 (GSKKTCTEWA…EQGGGCHSDT (212 aa)) lie on the Cytoplasmic side of the membrane. The Lys-Thr-X-X-X-Trp motif, mediates interaction with the PDZ domain of Dvl family members motif lies at 498–503 (KTCTEW). The disordered stretch occupies residues 588 to 706 (EIQTSPETSM…EQGGGCHSDT (119 aa)). The span at 646–658 (ARSEGRISPKSDI) shows a compositional bias: basic and acidic residues. Ser-653 is subject to Phosphoserine. Residues 662 to 672 (GLAQSNNLQVP) are compositionally biased toward polar residues. Over residues 673–685 (SSSEPSSLKGSTS) the composition is skewed to low complexity. Basic and acidic residues predominate over residues 694–706 (VRKEQGGGCHSDT).

It belongs to the G-protein coupled receptor Fz/Smo family. As to quaternary structure, interacts with LMBR1L. Ubiquitinated by ZNRF3, leading to its degradation by the proteasome. In terms of tissue distribution, detected in adult heart, brain, placenta, lung, liver, skeletal muscle, kidney, pancreas, thymus, prostate, testis, ovary, small intestine and colon. In the fetus, expressed in brain, lung, liver and kidney.

It is found in the membrane. The protein resides in the cell membrane. Its subcellular location is the cell surface. The protein localises to the apical cell membrane. It localises to the cytoplasmic vesicle membrane. It is found in the endoplasmic reticulum membrane. Functionally, receptor for Wnt proteins. Most of frizzled receptors are coupled to the beta-catenin canonical signaling pathway, which leads to the activation of disheveled proteins, inhibition of GSK-3 kinase, nuclear accumulation of beta-catenin and activation of Wnt target genes. A second signaling pathway involving PKC and calcium fluxes has been seen for some family members, but it is not yet clear if it represents a distinct pathway or if it can be integrated in the canonical pathway, as PKC seems to be required for Wnt-mediated inactivation of GSK-3 kinase. Both pathways seem to involve interactions with G-proteins. May be involved in transduction and intercellular transmission of polarity information during tissue morphogenesis and/or in differentiated tissues. Together with FZD3, is involved in the neural tube closure and plays a role in the regulation of the establishment of planar cell polarity (PCP), particularly in the orientation of asymmetric bundles of stereocilia on the apical faces of a subset of auditory and vestibular sensory cells located in the inner ear. This is Frizzled-6 (FZD6) from Homo sapiens (Human).